The following is a 452-amino-acid chain: Pup--protein ligase (452 aa).

A Mg(2+)-binding site is contributed by E9. Position 53 (R53) interacts with ATP. Y55 is a binding site for Mg(2+). The Proton acceptor role is filled by D57. A Mg(2+)-binding site is contributed by E63. Residues T66 and W419 each coordinate ATP.

This sequence belongs to the Pup ligase/Pup deamidase family. Pup-conjugating enzyme subfamily.

It carries out the reaction ATP + [prokaryotic ubiquitin-like protein]-L-glutamate + [protein]-L-lysine = ADP + phosphate + N(6)-([prokaryotic ubiquitin-like protein]-gamma-L-glutamyl)-[protein]-L-lysine.. Its pathway is protein degradation; proteasomal Pup-dependent pathway. It functions in the pathway protein modification; protein pupylation. Its function is as follows. Catalyzes the covalent attachment of the prokaryotic ubiquitin-like protein modifier Pup to the proteasomal substrate proteins, thereby targeting them for proteasomal degradation. This tagging system is termed pupylation. The ligation reaction involves the side-chain carboxylate of the C-terminal glutamate of Pup and the side-chain amino group of a substrate lysine. The chain is Pup--protein ligase from Nocardia farcinica (strain IFM 10152).